Here is a 149-residue protein sequence, read N- to C-terminus: Transcriptional repressor NrdR (149 aa).

Residues 3-34 (CPFCSTEETKVIDSRLVSDGYQVRRRRECTKC) fold into a zinc finger. The 91-residue stretch at 49–139 (PKIIKNNGMR…VYLSFENINE (91 aa)) folds into the ATP-cone domain.

This sequence belongs to the NrdR family. It depends on Zn(2+) as a cofactor.

Functionally, negatively regulates transcription of bacterial ribonucleotide reductase nrd genes and operons by binding to NrdR-boxes. This is Transcriptional repressor NrdR from Mannheimia succiniciproducens (strain KCTC 0769BP / MBEL55E).